Here is an 898-residue protein sequence, read N- to C-terminus: Chaperone protein ClpB 1 (898 aa).

One can recognise a Clp R domain in the interval 6–148 (PTKFTEQAWD…ELAIKAIRGS (143 aa)). Repeat regions lie at residues 9–74 (FTEQ…TNRQ) and 85–148 (LGRS…IRGS). Residues 161 to 344 (EALDKYGRDL…RRFQQVYVKQ (184 aa)) are NBD1. Residue 208-215 (GEPGVGKT) participates in ATP binding. A linker region spans residues 345–560 (PSVDDTISIL…IAEIVAGWTG (216 aa)). A coiled-coil region spans residues 395-536 (IDLVDEAAAR…KESKLLEIQG (142 aa)). The tract at residues 570–781 (ERQKLLQLEG…RIDDLIIFHT (212 aa)) is NBD2. 620–627 (GPTGVGKT) contributes to the ATP binding site. The tract at residues 782 to 898 (LKRDELRRIV…TAVEVEVLSS (117 aa)) is C-terminal.

This sequence belongs to the ClpA/ClpB family. In terms of assembly, homohexamer. The oligomerization is ATP-dependent.

The protein resides in the cytoplasm. Its function is as follows. Part of a stress-induced multi-chaperone system, it is involved in the recovery of the cell from heat-induced damage, in cooperation with DnaK, DnaJ and GrpE. Acts before DnaK, in the processing of protein aggregates. Protein binding stimulates the ATPase activity; ATP hydrolysis unfolds the denatured protein aggregates, which probably helps expose new hydrophobic binding sites on the surface of ClpB-bound aggregates, contributing to the solubilization and refolding of denatured protein aggregates by DnaK. The chain is Chaperone protein ClpB 1 (clpB1) from Synechocystis sp. (strain ATCC 27184 / PCC 6803 / Kazusa).